The chain runs to 457 residues: Multidrug resistance protein MdtK (457 aa).

Transmembrane regions (helical) follow at residues 11 to 31 (LLALAIPVVIAQLSQTAMGVV), 46 to 66 (AVAVGTSIWLPAILFGHGLLL), 93 to 113 (WLALCVSVLIMLVLYNSDHVI), 127 to 147 (AVGFLHAIMWGVPGYLFFQVL), 160 to 180 (GMVIGFVGLLVNIPINYIFIY), 188 to 208 (LGGVGCGVATASVYWVMFLMM), 243 to 263 (LPVALALFFEVTLFAVVALLV), 283 to 301 (LMFMLPMSLSVAATIRVGF), 316 to 336 (YTSMAVGLLLASVTAVFTIVF), 357 to 377 (LMLLAALYQLSDAVQVIGSGV), 387 to 407 (IFFITFTAYWLLGLPSGYLLG), and 418 to 438 (PAGFWIGFIIGLTAAAILMVL).

Belongs to the multi antimicrobial extrusion (MATE) (TC 2.A.66.1) family. MdtK subfamily.

The protein localises to the cell inner membrane. Multidrug efflux pump that functions probably as a Na(+)/drug antiporter. The polypeptide is Multidrug resistance protein MdtK (Yersinia pseudotuberculosis serotype O:1b (strain IP 31758)).